We begin with the raw amino-acid sequence, 448 residues long: Tubulin beta chain (448 aa).

The GTP site is built by Gln11, Glu69, Ser138, Gly142, Thr143, Gly144, Asn204, and Asn226. Residue Glu69 coordinates Mg(2+). Residues 429–448 (GIDEGDEDYEIEEEKEPLEY) form a disordered region.

The protein belongs to the tubulin family. Dimer of alpha and beta chains. A typical microtubule is a hollow water-filled tube with an outer diameter of 25 nm and an inner diameter of 15 nM. Alpha-beta heterodimers associate head-to-tail to form protofilaments running lengthwise along the microtubule wall with the beta-tubulin subunit facing the microtubule plus end conferring a structural polarity. Microtubules usually have 13 protofilaments but different protofilament numbers can be found in some organisms and specialized cells. The cofactor is Mg(2+).

The protein localises to the cytoplasm. The protein resides in the cytoskeleton. Functionally, tubulin is the major constituent of microtubules, a cylinder consisting of laterally associated linear protofilaments composed of alpha- and beta-tubulin heterodimers. Microtubules grow by the addition of GTP-tubulin dimers to the microtubule end, where a stabilizing cap forms. Below the cap, tubulin dimers are in GDP-bound state, owing to GTPase activity of alpha-tubulin. The sequence is that of Tubulin beta chain (nda3) from Schizosaccharomyces pombe (strain 972 / ATCC 24843) (Fission yeast).